The sequence spans 602 residues: T-cell surface protein tactile (602 aa).

The N-terminal stretch at 1–21 is a signal peptide; it reads MGRKWTYCVVYTIIQIQFFRG. At 22–536 the chain is on the extracellular side; the sequence is VWEELFNVGD…IIVNQPSDGM (515 aa). Ig-like V-type domains follow at residues 24–134 and 138–244; these read EELF…VYNL and PYTQ…STTV. 16 N-linked (GlcNAc...) asparagine glycosylation sites follow: Asn-42, Asn-100, Asn-107, Asn-145, Asn-153, Asn-163, Asn-195, Asn-196, Asn-258, Asn-281, Asn-306, Asn-330, Asn-348, Asn-415, Asn-436, and Asn-514. Cys-45 and Cys-118 are disulfide-bonded. The cysteines at positions 160 and 228 are disulfide-linked. The Ig-like C2-type domain maps to 250-355; it reads PEILMTVENS…MWNTSSQPIT (106 aa). A disulfide bridge links Cys-271 with Cys-335. A disordered region spans residues 402-478; sequence ENGLTPDATP…PQEPDSPVSW (77 aa). Residues 409–433 show a composition bias toward polar residues; that stretch reads ATPQTSNSSMTTKDGNYLEASSGTD. Positions 434-448 are enriched in low complexity; the sequence is AKNSSRAAASSKSGS. The chain crosses the membrane as a helical span at residues 537–557; sequence SWPVLVAALLFFCTLLFGLGV. The Cytoplasmic segment spans residues 558–602; sequence RKWYRYQNEIMERPPPFKPPPPPIKYTYIQEPIGCDLCCHEMEVL.

As to quaternary structure, homodimer; disulfide-linked. Interacts with PVR.

Its subcellular location is the membrane. Functionally, may be involved in adhesive interactions of activated T and NK cells during the late phase of the immune response. Promotes NK cell-target adhesion by interacting with PVR present on target cells. May function at a time after T and NK cells have penetrated the endothelium using integrins and selectins, when they are actively engaging diseased cells and moving within areas of inflammation. The protein is T-cell surface protein tactile (Cd96) of Mus musculus (Mouse).